A 361-amino-acid chain; its full sequence is Protein RecA (361 aa).

77 to 84 (GPESSGKT) contributes to the ATP binding site.

The protein belongs to the RecA family.

It localises to the cytoplasm. Its function is as follows. Can catalyze the hydrolysis of ATP in the presence of single-stranded DNA, the ATP-dependent uptake of single-stranded DNA by duplex DNA, and the ATP-dependent hybridization of homologous single-stranded DNAs. It interacts with LexA causing its activation and leading to its autocatalytic cleavage. This chain is Protein RecA, found in Brucella anthropi (strain ATCC 49188 / DSM 6882 / CCUG 24695 / JCM 21032 / LMG 3331 / NBRC 15819 / NCTC 12168 / Alc 37) (Ochrobactrum anthropi).